The following is a 160-amino-acid chain: MDLVTLDATQHASYPEYCSLLFQGKASKQLSFEQIANHLGRSEVAVAALFYGHARASQEDVEKLCELLGIPPADLSKRLRGFPDRGKGVDMPPKDPLIYRLYEIVQNYGQAYKAVMNEKFGDGIMSAIAFSTKVDKELDDQGNAWAVITMKGKWLPFTRF.

Active-site residues include Arg100, Glu103, and Ser126.

This sequence belongs to the cyanase family.

It carries out the reaction cyanate + hydrogencarbonate + 3 H(+) = NH4(+) + 2 CO2. Catalyzes the reaction of cyanate with bicarbonate to produce ammonia and carbon dioxide. The sequence is that of Cyanate hydratase from Arthroderma otae (strain ATCC MYA-4605 / CBS 113480) (Microsporum canis).